A 244-amino-acid polypeptide reads, in one-letter code: MSFTVYPALDIRDGRVVRLLQGDYARETRYGDDVLPRAQAFADAGAQWMHLVDLDAAKAGGYTLAALLGQISRQTGLQVQTGGGVRSREDVARILDAGAARVVVGSLAVRDSATVIGWLQEFGTDRLTIALDTRQDAAGVWQLPVHGWTETAEATLDQLATQYAQAGLQHLLCTDIARDGMLSGPNMGLYAHLRALAPQLQVQVSGGARNLADVAAAKAAGCAGIVLGKALLEGHLDLKDALAC.

Catalysis depends on Asp-10, which acts as the Proton acceptor. The Proton donor role is filled by Asp-132.

It belongs to the HisA/HisF family.

It localises to the cytoplasm. The enzyme catalyses 1-(5-phospho-beta-D-ribosyl)-5-[(5-phospho-beta-D-ribosylamino)methylideneamino]imidazole-4-carboxamide = 5-[(5-phospho-1-deoxy-D-ribulos-1-ylimino)methylamino]-1-(5-phospho-beta-D-ribosyl)imidazole-4-carboxamide. It functions in the pathway amino-acid biosynthesis; L-histidine biosynthesis; L-histidine from 5-phospho-alpha-D-ribose 1-diphosphate: step 4/9. This is 1-(5-phosphoribosyl)-5-[(5-phosphoribosylamino)methylideneamino] imidazole-4-carboxamide isomerase from Xanthomonas campestris pv. campestris (strain 8004).